Consider the following 237-residue polypeptide: Photosystem I-associated linker protein CpcL (237 aa).

Residues 11-191 form the PBS-linker domain; the sequence is TTQNQRVQSF…DYRDRAGIVR (181 aa). A helical membrane pass occupies residues 208 to 228; the sequence is GVAILGVLLAISAGMTFLFVL.

Belongs to the phycobilisome linker protein family. Part of a specialized phycobilisome (PBS), a structure that is usually composed of two distinct substructures: a core complex and a number of rods radiating from the core. This protein is part of a core-less PBS rod (called CpcL-PBS). In vegetative cells associated substoichiometrically with photosystem I and phycobiliproteins phycocyanin as well as phycoerythrocyanin in the thylakoid membrane, not found in conventional, hemidiscoidal phycobilisomes.

It is found in the cellular thylakoid membrane. Rod linker protein, associated with phycocyanin (PC). Linker polypeptides determine the state of aggregation and the location of the disk-shaped phycobiliprotein units within the phycobilisome (PBS) and modulate their spectroscopic properties in order to mediate a directed and optimal energy transfer. Forms a supercomplex with tetrameric photosystem I (PSI) and PC that allows efficient energy transfer from PC to PSI. This protein seems to be in the middle of the PC hexameric rod and may anchor the PC rods at the periphery of PSI tetramers. May be involved in the cyclic electron transport around PSI that provides ATP needed for N(2) fixation in heterocysts. This chain is Photosystem I-associated linker protein CpcL, found in Nostoc sp. (strain PCC 7120 / SAG 25.82 / UTEX 2576).